A 331-amino-acid chain; its full sequence is Isopenicillin N synthase (331 aa).

Isopenicillin N is bound by residues R87, Y91, S183, and Y189. N-[(5S)-5-amino-5-carboxypentanoyl]-L-cysteinyl-D-valine-binding residues include R87, Y91, S183, Y189, H214, and D216. A Fe2OG dioxygenase domain is found at 176–288 (KKEDALSSVV…RQSLPFFVNL (113 aa)). Residues H214, D216, and H270 each contribute to the Fe(2+) site. R279 is a 2-oxoglutarate binding site. S281 contributes to the isopenicillin N binding site. Residue S281 participates in N-[(5S)-5-amino-5-carboxypentanoyl]-L-cysteinyl-D-valine binding.

It belongs to the iron/ascorbate-dependent oxidoreductase family. As to quaternary structure, monomer. It depends on Fe(2+) as a cofactor.

The protein localises to the cytoplasm. The protein resides in the cytosol. It catalyses the reaction N-[(5S)-5-amino-5-carboxypentanoyl]-L-cysteinyl-D-valine + O2 = isopenicillin N + 2 H2O. It participates in antibiotic biosynthesis; penicillin G biosynthesis; penicillin G from L-alpha-aminoadipate and L-cysteine and L-valine: step 2/3. Its function is as follows. Isopenicillin N synthase; part of the gene cluster that mediates the biosynthesis of penicillin, the world's most important antibiotic. IpnA catalyzes the cyclization of the tripeptide N-[(5S)-5-amino-5-carboxypentanoyl]-L-cysteinyl-D-valine (LLD-ACV or ACV) to form isopenicillin N (IPN) that contains the beta-lactam nucleus. The penicillin biosynthesis occurs via 3 enzymatic steps, the first corresponding to the production of the tripeptide N-[(5S)-5-amino-5-carboxypentanoyl]-L-cysteinyl-D-valine (LLD-ACV or ACV) by the NRPS acvA. The tripeptide ACV is then cyclized to isopenicillin N (IPN) by the isopenicillin N synthase ipnA that forms the beta-lactam nucleus. Finally, the alpha-aminoadipyl side chain is exchanged for phenylacetic acid by the isopenicillin N acyltransferase aatA to yield penicillin in the peroxisomal matrix. This is Isopenicillin N synthase from Penicillium chrysogenum (Penicillium notatum).